We begin with the raw amino-acid sequence, 492 residues long: Probable cytochrome P450 313a3 (492 aa).

Position 438 (Cys438) interacts with heme.

Belongs to the cytochrome P450 family. Requires heme as cofactor.

The protein resides in the endoplasmic reticulum membrane. It localises to the microsome membrane. Functionally, may be involved in the metabolism of insect hormones and in the breakdown of synthetic insecticides. This Drosophila melanogaster (Fruit fly) protein is Probable cytochrome P450 313a3 (Cyp313a3).